The primary structure comprises 253 residues: GTP cyclohydrolase III (253 aa).

It belongs to the archaeal-type GTP cyclohydrolase family.

The enzyme catalyses GTP + 3 H2O = 2-amino-5-formylamino-6-(5-phospho-D-ribosylamino)pyrimidin-4(3H)-one + 2 phosphate + 2 H(+). Catalyzes the formation of 2-amino-5-formylamino-6-ribofuranosylamino-4(3H)-pyrimidinone ribonucleotide monophosphate and inorganic phosphate from GTP. Also has an independent pyrophosphate phosphohydrolase activity. The protein is GTP cyclohydrolase III of Natronomonas pharaonis (strain ATCC 35678 / DSM 2160 / CIP 103997 / JCM 8858 / NBRC 14720 / NCIMB 2260 / Gabara) (Halobacterium pharaonis).